Reading from the N-terminus, the 119-residue chain is Flagellar transcriptional regulator FlhD (119 aa).

It belongs to the FlhD family. Homodimer; disulfide-linked. Forms a heterohexamer composed of two FlhC and four FlhD subunits. Each FlhC binds a FlhD dimer, forming a heterotrimer, and a hexamer assembles by dimerization of two heterotrimers.

Its subcellular location is the cytoplasm. In terms of biological role, functions in complex with FlhC as a master transcriptional regulator that regulates transcription of several flagellar and non-flagellar operons by binding to their promoter region. Activates expression of class 2 flagellar genes, including fliA, which is a flagellum-specific sigma factor that turns on the class 3 genes. Also regulates genes whose products function in a variety of physiological pathways. This chain is Flagellar transcriptional regulator FlhD, found in Enterobacter sp. (strain 638).